Here is a 216-residue protein sequence, read N- to C-terminus: Octanoyltransferase (216 aa).

Positions 32–207 (PDSQDEIWLV…QLVKHLDYAE (176 aa)) constitute a BPL/LPL catalytic domain. Substrate is bound by residues 71–78 (RGGQVTYH), 138–140 (SLG), and 151–153 (GLA). Residue Cys169 is the Acyl-thioester intermediate of the active site.

Belongs to the LipB family.

The protein localises to the cytoplasm. The catalysed reaction is octanoyl-[ACP] + L-lysyl-[protein] = N(6)-octanoyl-L-lysyl-[protein] + holo-[ACP] + H(+). It participates in protein modification; protein lipoylation via endogenous pathway; protein N(6)-(lipoyl)lysine from octanoyl-[acyl-carrier-protein]: step 1/2. In terms of biological role, catalyzes the transfer of endogenously produced octanoic acid from octanoyl-acyl-carrier-protein onto the lipoyl domains of lipoate-dependent enzymes. Lipoyl-ACP can also act as a substrate although octanoyl-ACP is likely to be the physiological substrate. The chain is Octanoyltransferase from Pseudomonas putida (strain ATCC 47054 / DSM 6125 / CFBP 8728 / NCIMB 11950 / KT2440).